Reading from the N-terminus, the 420-residue chain is Xyloglucan O-acetyltransferase 4 (420 aa).

Over 1 to 30 the chain is Cytoplasmic; the sequence is MTMHEKMKLPSCSCSAFKCGKKDRWLNMER. The chain crosses the membrane as a helical; Signal-anchor for type II membrane protein span at residues 31–51; sequence PIPFLLIGLTTILSVFILYTL. Residues 52–420 lie on the Lumenal side of the membrane; the sequence is NPLKFVIEHN…LLLAVLRRLD (369 aa). 4 disulfides stabilise this stretch: Cys78-Cys128, Cys99-Cys164, Cys108-Cys400, and Cys323-Cys396. Asn96 is a glycosylation site (N-linked (GlcNAc...) asparagine). Positions 151 to 153 match the GDS motif motif; it reads GDS. The active-site Nucleophile is Ser153. Residues Asn192, Asn212, Asn270, and Asn324 are each glycosylated (N-linked (GlcNAc...) asparagine). Asp395 acts as the Proton donor in catalysis. Positions 395–398 match the DXXH motif motif; it reads DCVH. His398 (proton acceptor) is an active-site residue.

The protein belongs to the PC-esterase family. TBL subfamily.

It localises to the golgi apparatus membrane. In terms of biological role, xyloglucan acetyltransferase that catalyzes the acetylation of fucosylated Gal residues on xyloglucan side chains. Predominantly catalyze 6-O-monoacetylation of Gal residues in the Fuc-Gal-Xyl trisaccharide side chains of xyloglucan oligomers. This is Xyloglucan O-acetyltransferase 4 from Populus trichocarpa (Western balsam poplar).